A 445-amino-acid chain; its full sequence is Serine--tRNA ligase (445 aa).

An L-serine-binding site is contributed by 250–252; the sequence is TAE. 281–283 is a binding site for ATP; that stretch reads RAE. Glutamate 304 contacts L-serine. 368-371 provides a ligand contact to ATP; that stretch reads EISS. Serine 404 is a binding site for L-serine.

The protein belongs to the class-II aminoacyl-tRNA synthetase family. Type-1 seryl-tRNA synthetase subfamily. In terms of assembly, homodimer. The tRNA molecule binds across the dimer.

It localises to the cytoplasm. It catalyses the reaction tRNA(Ser) + L-serine + ATP = L-seryl-tRNA(Ser) + AMP + diphosphate + H(+). It carries out the reaction tRNA(Sec) + L-serine + ATP = L-seryl-tRNA(Sec) + AMP + diphosphate + H(+). It functions in the pathway aminoacyl-tRNA biosynthesis; selenocysteinyl-tRNA(Sec) biosynthesis; L-seryl-tRNA(Sec) from L-serine and tRNA(Sec): step 1/1. Functionally, catalyzes the attachment of serine to tRNA(Ser). Is also able to aminoacylate tRNA(Sec) with serine, to form the misacylated tRNA L-seryl-tRNA(Sec), which will be further converted into selenocysteinyl-tRNA(Sec). This is Serine--tRNA ligase from Azorhizobium caulinodans (strain ATCC 43989 / DSM 5975 / JCM 20966 / LMG 6465 / NBRC 14845 / NCIMB 13405 / ORS 571).